A 624-amino-acid chain; its full sequence is MSKVIGIDLGTTNSAVAVLEGKEPKIITNPEGNRTTPSVVAFKNGEIQVGEVAKRQAITNPNTIVSIKSHMGEEGYKVKVGDKEYTPQEISAFILQYIKKFSEDYLGEKVTDAVITVPAYFNDAQRQATKDAGKIAGLNVQRIINEPTASALAYGLDKDENDEKVLVYDLGGGTFDVSILQLGDGVFQVLSTNGDTHLGGDDFDQRIMDWLIQNFKEENGVDLSNDKMALQRLKDAAEKAKKDLSGVSSTHISLPFISAGEAGPLHLEADLTRAKFDELTDDLVQKTKVAFDNALSDAGLTVNDIDKVILNGGSTRIPAVQKAVKDWAGKEPDHSINPDEAVALGAAIQGGVISGDVKDIVLLDVTPLSLGIETMGGVFTKLIDRNTTIPTSKSQIFSTAADNQPAVDVHVLQGERPMAADDKTLGRFELTDIPPAPRGVPQIQVTFDIDKNGIVNVSAKDMGTGKEQKITIKSSSGLSDEEIKKMQKDAEEHAEEDKKRKEEVDLRNEVDQLIFTTEKTLKETEGKVPETETKNVQDALDALKKAQKDNNLDEMKEKKEALSKAAQDLAVKLYQQNGGAQGAAGQAGPQGPQNGGQPNNDNGSDNGQGGSTVDGDFHKVDPDK.

T174 carries the post-translational modification Phosphothreonine; by autocatalysis. Disordered regions lie at residues I470–V504 and N577–K624. Positions E481–V504 are enriched in basic and acidic residues. Residues N577–D605 are compositionally biased toward low complexity. The span at G615 to K624 shows a compositional bias: basic and acidic residues.

Belongs to the heat shock protein 70 family.

Acts as a chaperone. This chain is Chaperone protein DnaK, found in Lactobacillus johnsonii (strain CNCM I-12250 / La1 / NCC 533).